The following is a 445-amino-acid chain: 3-phosphoshikimate 1-carboxyvinyltransferase (445 aa).

Positions 28, 29, and 33 each coordinate 3-phosphoshikimate. Position 28 (K28) interacts with phosphoenolpyruvate. G101 and R129 together coordinate phosphoenolpyruvate. S175, Q177, D328, and K355 together coordinate 3-phosphoshikimate. Residue Q177 coordinates phosphoenolpyruvate. The active-site Proton acceptor is the D328. Positions 359 and 402 each coordinate phosphoenolpyruvate.

Belongs to the EPSP synthase family. Monomer.

The protein localises to the cytoplasm. The catalysed reaction is 3-phosphoshikimate + phosphoenolpyruvate = 5-O-(1-carboxyvinyl)-3-phosphoshikimate + phosphate. It functions in the pathway metabolic intermediate biosynthesis; chorismate biosynthesis; chorismate from D-erythrose 4-phosphate and phosphoenolpyruvate: step 6/7. Its function is as follows. Catalyzes the transfer of the enolpyruvyl moiety of phosphoenolpyruvate (PEP) to the 5-hydroxyl of shikimate-3-phosphate (S3P) to produce enolpyruvyl shikimate-3-phosphate and inorganic phosphate. In Rhodopseudomonas palustris (strain HaA2), this protein is 3-phosphoshikimate 1-carboxyvinyltransferase.